The sequence spans 314 residues: Acetaldehyde dehydrogenase 2 (314 aa).

15-18 contacts NAD(+); the sequence is SGNI. Cys133 functions as the Acyl-thioester intermediate in the catalytic mechanism. NAD(+)-binding positions include 164-172 and Asn289; that span reads SAGPGTRQN.

Belongs to the acetaldehyde dehydrogenase family.

The enzyme catalyses acetaldehyde + NAD(+) + CoA = acetyl-CoA + NADH + H(+). The sequence is that of Acetaldehyde dehydrogenase 2 from Nocardioides sp. (strain ATCC BAA-499 / JS614).